Reading from the N-terminus, the 377-residue chain is Delta(12) fatty acid desaturase DES8.11 (377 aa).

Helical transmembrane passes span 55–75 (LIVAYVFYYLANTYIPLIPTP) and 79–99 (LAWPVYWFCQASILTGLWVIG). The Histidine box-1 motif lies at 100–104 (HECGH). A helical membrane pass occupies residues 112 to 132 (LIDDIVGFVLHSALLTPYFSW). The short motif at 136–140 (HRNHH) is the Histidine box-2 element. Transmembrane regions (helical) follow at residues 174–194 (VFTLVFRLTLGFPLYLLTNIS), 220–240 (VLLSDFGLLAVFYAIKLLVAA), and 244–264 (AWVINMYAIPVLGVSVFFVLI). The short motif at 310–314 (HVLHH) is the Histidine box-3 element.

Belongs to the fatty acid desaturase type 1 family.

The protein localises to the membrane. It functions in the pathway lipid metabolism; polyunsaturated fatty acid biosynthesis. Converts linoleic acid into a conjugated octadecatrienoic acid, probably calendic acid. This chain is Delta(12) fatty acid desaturase DES8.11, found in Calendula officinalis (Pot marigold).